The following is a 243-amino-acid chain: uncharacterized protein (243 aa).

Belongs to the mycobacterial PPE family.

The protein resides in the cell membrane. This is an uncharacterized protein from Mycobacterium tuberculosis (strain CDC 1551 / Oshkosh).